Here is a 1481-residue protein sequence, read N- to C-terminus: RNA helicase aquarius (1481 aa).

The segment at 1 to 416 is helical region with structural similarity to ARM repeat domains; that stretch reads MAAPAQPKKI…LVSRHERRIS (416 aa). The segment at 417 to 1481 is required for assembly of the IB complex; the sequence is QIQQLNQMPL…DAESVPTETE (1065 aa). Residues 754–773 form a disordered region; the sequence is RSGKGKKRKDADGEEDDTEE. Residues Gln801, Gln806, and 826–831 contribute to the ATP site; that span reads GTGKTD. Lys1055 is subject to N6-acetyllysine. A compositionally biased stretch (acidic residues) spans 1396 to 1414; sequence EEGEEGQSQETEMEAEEET. A disordered region spans residues 1396–1481; it reads EEGEEGQSQE…DAESVPTETE (86 aa). A compositionally biased stretch (polar residues) spans 1418 to 1448; it reads QGNLTPSPADASLSQETPAAQPDCSSQTEDT. Positions 1455–1468 are enriched in low complexity; sequence ATAAEPVSAAAEAA.

The protein belongs to the CWF11 family. In terms of assembly, identified in the spliceosome C complex. Component of the XAB2 complex, a multimeric protein complex composed of XAB2, PRPF19, AQR, ZNF830, ISY1, and PPIE. Identified in a pentameric intron-binding (IB) complex composed of AQR, XAB2, ISY1, ZNF830 and PPIE that is incorporated into the spliceosome as a preassembled complex. The IB complex does not contain PRPF19. Within the spliceosome, interacts with SNRPA1, SF3B1, SF3B3, SF3A1 and SF3A2.

It is found in the nucleus. The protein resides in the nucleoplasm. It catalyses the reaction ATP + H2O = ADP + phosphate + H(+). Its function is as follows. Involved in pre-mRNA splicing as component of the spliceosome. Intron-binding spliceosomal protein required to link pre-mRNA splicing and snoRNP (small nucleolar ribonucleoprotein) biogenesis. Plays a key role in position-dependent assembly of intron-encoded box C/D small snoRNP, splicing being required for snoRNP assembly. May act by helping the folding of the snoRNA sequence. Binds to intron of pre-mRNAs in a sequence-independent manner, contacting the region between snoRNA and the branchpoint of introns (40 nucleotides upstream of the branchpoint) during the late stages of splicing. Has ATP-dependent RNA helicase activity and can unwind double-stranded RNA molecules with a 3' overhang (in vitro). This chain is RNA helicase aquarius (Aqr), found in Mus musculus (Mouse).